The chain runs to 344 residues: tRNA N6-adenosine threonylcarbamoyltransferase (344 aa).

Positions 112 and 116 each coordinate Fe cation. Residues Leu-134–Gly-138, Asp-167, Gly-180, and Asn-280 each bind substrate. Asp-308 contributes to the Fe cation binding site.

Belongs to the KAE1 / TsaD family. Requires Fe(2+) as cofactor.

It is found in the cytoplasm. It catalyses the reaction L-threonylcarbamoyladenylate + adenosine(37) in tRNA = N(6)-L-threonylcarbamoyladenosine(37) in tRNA + AMP + H(+). Its function is as follows. Required for the formation of a threonylcarbamoyl group on adenosine at position 37 (t(6)A37) in tRNAs that read codons beginning with adenine. Is involved in the transfer of the threonylcarbamoyl moiety of threonylcarbamoyl-AMP (TC-AMP) to the N6 group of A37, together with TsaE and TsaB. TsaD likely plays a direct catalytic role in this reaction. The polypeptide is tRNA N6-adenosine threonylcarbamoyltransferase (Rickettsia peacockii (strain Rustic)).